We begin with the raw amino-acid sequence, 702 residues long: Ribosomal RNA large subunit methyltransferase K/L (702 aa).

The 112-residue stretch at 43–154 folds into the THUMP domain; it reads LIYQSLMWSR…KETASIALDL (112 aa).

The protein belongs to the methyltransferase superfamily. RlmKL family.

The protein resides in the cytoplasm. The catalysed reaction is guanosine(2445) in 23S rRNA + S-adenosyl-L-methionine = N(2)-methylguanosine(2445) in 23S rRNA + S-adenosyl-L-homocysteine + H(+). It catalyses the reaction guanosine(2069) in 23S rRNA + S-adenosyl-L-methionine = N(2)-methylguanosine(2069) in 23S rRNA + S-adenosyl-L-homocysteine + H(+). Its function is as follows. Specifically methylates the guanine in position 2445 (m2G2445) and the guanine in position 2069 (m7G2069) of 23S rRNA. The sequence is that of Ribosomal RNA large subunit methyltransferase K/L from Salmonella paratyphi B (strain ATCC BAA-1250 / SPB7).